We begin with the raw amino-acid sequence, 512 residues long: Phosphotransferase UL97 homolog (512 aa).

Catalysis depends on aspartate 274, which acts as the Proton acceptor.

It belongs to the protein kinase superfamily. Tyr protein kinase family.

The enzyme catalyses L-tyrosyl-[protein] + ATP = O-phospho-L-tyrosyl-[protein] + ADP + H(+). In Elephantid herpesvirus 1 (isolate Asian elephant/Berlin/Kiba/1998) (EIHV-1), this protein is Phosphotransferase UL97 homolog.